Reading from the N-terminus, the 235-residue chain is Probable inactive serine protease 37 (235 aa).

The first 19 residues, 1–19 (MKYVFYLGVLAGTFFFADS), serve as a signal peptide directing secretion. Residues 20-233 (SVQKEDPAPY…YVSWIENTAK (214 aa)) enclose the Peptidase S1 domain. Disulfide bonds link C40–C56, C131–C198, and C163–C177.

It belongs to the peptidase S1 family. As to expression, testis-specific. Expressed in spermatids (at protein level).

It localises to the cytoplasmic vesicle. Its subcellular location is the secretory vesicle. The protein resides in the acrosome. It is found in the secreted. Functionally, plays a role in male fertility. May have a role in sperm migration or binding to zona-intact eggs. Involved in the activation of the proacrosin/acrosin system. The chain is Probable inactive serine protease 37 from Homo sapiens (Human).